The chain runs to 431 residues: Adenylosuccinate synthetase (431 aa).

Residues 12–18 and 40–42 each bind GTP; these read GDEGKGK and GHT. D13 serves as the catalytic Proton acceptor. Positions 13 and 40 each coordinate Mg(2+). Residues 13 to 16, 38 to 41, T129, R143, Q224, and T239 each bind IMP; these read DEGK and NAGH. Residue H41 is the Proton donor of the active site. An Isoglutamyl lysine isopeptide (Lys-Gln) (interchain with Q-Cter in protein Pup) cross-link involves residue K292. 299 to 305 provides a ligand contact to substrate; that stretch reads VTTGRAR. R303 provides a ligand contact to IMP. Residues R305, 331 to 333, and 413 to 415 contribute to the GTP site; these read KLD and GVG.

The protein belongs to the adenylosuccinate synthetase family. As to quaternary structure, homodimer. Mg(2+) serves as cofactor.

Its subcellular location is the cytoplasm. The catalysed reaction is IMP + L-aspartate + GTP = N(6)-(1,2-dicarboxyethyl)-AMP + GDP + phosphate + 2 H(+). The protein operates within purine metabolism; AMP biosynthesis via de novo pathway; AMP from IMP: step 1/2. Functionally, plays an important role in the de novo pathway of purine nucleotide biosynthesis. Catalyzes the first committed step in the biosynthesis of AMP from IMP. This is Adenylosuccinate synthetase from Mycolicibacterium smegmatis (strain ATCC 700084 / mc(2)155) (Mycobacterium smegmatis).